We begin with the raw amino-acid sequence, 115 residues long: Phosphoribosyl-ATP pyrophosphatase (115 aa).

This sequence belongs to the PRA-PH family.

It localises to the cytoplasm. The enzyme catalyses 1-(5-phospho-beta-D-ribosyl)-ATP + H2O = 1-(5-phospho-beta-D-ribosyl)-5'-AMP + diphosphate + H(+). Its pathway is amino-acid biosynthesis; L-histidine biosynthesis; L-histidine from 5-phospho-alpha-D-ribose 1-diphosphate: step 2/9. The sequence is that of Phosphoribosyl-ATP pyrophosphatase from Bordetella parapertussis (strain 12822 / ATCC BAA-587 / NCTC 13253).